A 1018-amino-acid polypeptide reads, in one-letter code: UPF0182 protein Francci3_3781 (1018 aa).

The next 7 membrane-spanning stretches (helical) occupy residues threonine 13–phenylalanine 33, isoleucine 60–leucine 80, methionine 109–alanine 129, phenylalanine 167–histidine 187, alanine 208–aspartate 228, alanine 250–isoleucine 270, and leucine 283–valine 303. 2 stretches are compositionally biased toward low complexity: residues threonine 886 to alanine 896 and serine 960 to alanine 980. 2 disordered regions span residues threonine 886–aspartate 920 and serine 960–glycine 1018. Over residues serine 981–serine 995 the composition is skewed to pro residues.

It belongs to the UPF0182 family.

It is found in the cell membrane. This Frankia casuarinae (strain DSM 45818 / CECT 9043 / HFP020203 / CcI3) protein is UPF0182 protein Francci3_3781.